The following is a 138-amino-acid chain: Large ribosomal subunit protein uL16 (138 aa).

Over residues 1 to 16 the composition is skewed to basic residues; sequence MLIPKRVKYRRQHRPT. Positions 1-23 are disordered; it reads MLIPKRVKYRRQHRPTRSGVSKG.

This sequence belongs to the universal ribosomal protein uL16 family. In terms of assembly, part of the 50S ribosomal subunit.

Functionally, binds 23S rRNA and is also seen to make contacts with the A and possibly P site tRNAs. The sequence is that of Large ribosomal subunit protein uL16 from Corynebacterium aurimucosum (strain ATCC 700975 / DSM 44827 / CIP 107346 / CN-1) (Corynebacterium nigricans).